The following is a 274-amino-acid chain: Kit ligand (274 aa).

Positions 1-25 (MKKTQTWIITCIYLQLLLFNPLVHT) are cleaved as a signal peptide. The residue at position 26 (Q26) is a Pyrrolidone carboxylic acid. Residues 26-215 (QGICSNRVTD…SNSIEDSSLQ (190 aa)) are Extracellular-facing. 2 disulfides stabilise this stretch: C29–C114 and C68–C164. Residues N90, N145, and N196 are each glycosylated (N-linked (GlcNAc...) asparagine). A helical membrane pass occupies residues 216 to 238 (WAAVALPAFFSLVIGFAFGAFYW). Residues 239–274 (KKKQPNLTRTVENRQINEEDNEISMLQEKEREFQEV) are Cytoplasmic-facing.

The protein belongs to the SCF family. In terms of assembly, homodimer, non-covalently linked. A soluble form is produced by proteolytic processing of isoform 1 in the extracellular domain.

The protein localises to the cell membrane. Its subcellular location is the cytoplasm. It localises to the cytoskeleton. It is found in the cell projection. The protein resides in the lamellipodium. The protein localises to the filopodium. Its subcellular location is the secreted. Stimulates the proliferation of mast cells. Able to augment the proliferation of both myeloid and lymphoid hematopoietic progenitors in bone marrow culture. Also mediates cell-cell adhesion. Acts synergistically with other cytokines, probably interleukins. In Bos taurus (Bovine), this protein is Kit ligand (KITLG).